The chain runs to 321 residues: MRSHRSVKVSLVGAGNIGGTLAYMLGVAGICQELVFVDVMDGVPRGKLLDIGHALAISGVDITAVGGSDYAAIEGSDAIVVTAGLPRKEGMSREDLLMANAAVIKGVAENIRKYSPDAFVIVVTNPLDAMVWYMHQCSGLPVNKVVGMAGVLDSARFSFFLAKHMSVSVSSVSSVVLGGHGDLMLPLLKYSTVGGVSVSDLISCGRLSSEDVHAIIERTRKGGEEIVKLLKSGSAYYAPAASCMNMLESYLFDKRCVIPCSVGLDGKYGVNGGLFVGVPAVIGKNGVEEVIEYVLSQEEREIFEKSVGLISNSVKIISEQK.

NAD(+)-binding positions include 13-18 and aspartate 38; that span reads GAGNIG. Residues arginine 87 and arginine 93 each coordinate substrate. Residues asparagine 100 and 123-125 each bind NAD(+); that span reads VTN. Substrate-binding residues include asparagine 125 and arginine 156. Catalysis depends on histidine 180, which acts as the Proton acceptor.

Belongs to the LDH/MDH superfamily. MDH type 3 family.

It catalyses the reaction (S)-malate + NAD(+) = oxaloacetate + NADH + H(+). In terms of biological role, catalyzes the reversible oxidation of malate to oxaloacetate. This chain is Malate dehydrogenase, found in Anaplasma phagocytophilum (strain HZ).